We begin with the raw amino-acid sequence, 299 residues long: Syntenin-1 (299 aa).

S2 carries the N-acetylserine modification. Residues 2–103 form an interaction with PDCD6IP region; the sequence is SLYPSLEDLK…VAPVTGNDAG (102 aa). 3 consecutive short sequence motifs (LYPX(n)L motif) follow at residues 3–7, 46–50, and 50–54; these read LYPSL, LYPKL, and LYPEL. At S6 the chain carries Phosphoserine. Y47 carries the post-translational modification Phosphotyrosine. 2 PDZ domains span residues 115–194 and 199–273; these read EVIL…IRDR and TVTM…IMPT. Position 251-252 (251-252) interacts with a 1,2-diacyl-sn-glycero-3-phospho-(1D-myo-inositol-4,5-bisphosphate); that stretch reads KD.

As to quaternary structure, monomer and homodimer. Interacts with SDC1, SDC2, SDC3, SDC4, NRXN2, EPHA7, EPHB1, NF2 isoform 1, TGFA, IL5RA, NFASC, SDCBP2 and PTPRJ. Interacts with PDCD6IP. Forms a complex with PDCD6IP and SDC2. Interacts (via C-terminus) with TGFBR1. Binds to FZD7; this interaction is increased by inositol trisphosphate (IP3). Interacts with SMO. Post-translationally, phosphorylated on tyrosine residues.

It is found in the cell junction. It localises to the focal adhesion. The protein resides in the adherens junction. Its subcellular location is the cell membrane. The protein localises to the endoplasmic reticulum membrane. It is found in the nucleus. It localises to the melanosome. The protein resides in the cytoplasm. Its subcellular location is the cytosol. The protein localises to the cytoskeleton. It is found in the secreted. It localises to the extracellular exosome. The protein resides in the membrane raft. Multifunctional adapter protein involved in diverse array of functions including trafficking of transmembrane proteins, neuro and immunomodulation, exosome biogenesis, and tumorigenesis. Positively regulates TGFB1-mediated SMAD2/3 activation and TGFB1-induced epithelial-to-mesenchymal transition (EMT) and cell migration in various cell types. May increase TGFB1 signaling by enhancing cell-surface expression of TGFR1 by preventing the interaction between TGFR1 and CAV1 and subsequent CAV1-dependent internalization and degradation of TGFR1. In concert with SDC1/4 and PDCD6IP, regulates exosome biogenesis. Regulates migration, growth, proliferation, and cell cycle progression in a variety of cancer types. In adherens junctions may function to couple syndecans to cytoskeletal proteins or signaling components. Seems to couple transcription factor SOX4 to the IL-5 receptor (IL5RA). May also play a role in vesicular trafficking. Seems to be required for the targeting of TGFA to the cell surface in the early secretory pathway. This Mus musculus (Mouse) protein is Syntenin-1 (Sdcbp).